The following is a 295-amino-acid chain: Small ribosomal subunit protein uS2 (295 aa).

Positions 263–295 are disordered; that stretch reads KKFSKTKNIDEETNTEFEQALNDADENKNSDNA.

The protein belongs to the universal ribosomal protein uS2 family.

This chain is Small ribosomal subunit protein uS2, found in Rickettsia massiliae (strain Mtu5).